We begin with the raw amino-acid sequence, 188 residues long: MTVGVLSLQGSFYEHLFILSRLNTDHIQVKTSEDLSRVTRLIIPGGESTAMLALTQKSGLFDLVRDRIMSGMPVYGTCAGMIMLSTFVEDFPNQKTLSCLDIAVRRNAFGRQINSFESEVSFLNSKITVPFIRAPKITQIGEGVDVLSRLESGDIVAVRQGNVMATAFHPELTGGAAVHEYFLHLGLE.

46–48 serves as a coordination point for L-glutamine; sequence GES. Catalysis depends on Cys-78, which acts as the Nucleophile. Residues Arg-106 and 132–133 each bind L-glutamine; that span reads IR. Catalysis depends on charge relay system residues His-169 and Glu-171.

It belongs to the glutaminase PdxT/SNO family. In terms of assembly, in the presence of PdxS, forms a dodecamer of heterodimers. Only shows activity in the heterodimer.

It catalyses the reaction aldehydo-D-ribose 5-phosphate + D-glyceraldehyde 3-phosphate + L-glutamine = pyridoxal 5'-phosphate + L-glutamate + phosphate + 3 H2O + H(+). The catalysed reaction is L-glutamine + H2O = L-glutamate + NH4(+). The protein operates within cofactor biosynthesis; pyridoxal 5'-phosphate biosynthesis. Functionally, catalyzes the hydrolysis of glutamine to glutamate and ammonia as part of the biosynthesis of pyridoxal 5'-phosphate. The resulting ammonia molecule is channeled to the active site of PdxS. The polypeptide is Pyridoxal 5'-phosphate synthase subunit PdxT (Tropheryma whipplei (strain Twist) (Whipple's bacillus)).